Consider the following 421-residue polypeptide: MIFIEDIFADEVLDSRGNPTVRATVTLSDGSRASAIVPSGASTGVNEALELRDGGERYLGKGVLKACENVNTLIANELIGMSPYDQAEIDNIMLELDGTENKSKLGANAILGVSMAVARAAANSLDLPLFRYLGGANALVLPTPMLNIINGGAHADNDVDLQEYMIMPTGFDDFAEALRASSEVYHTLKKLLVADGHNTALGDEGGFAPNFKNNEEPIEYIIKAIEKAGYKPGEEITIALDAASSEFYKDGKYVLAGENKTLSAEELVDYYAYLCGKYPIVSIEDGVAEEDWEGWKILTDKLGDKIQLVGDDLFVTNKKILQKGIELGVANAILIKPNQIGTVSETMQTVRLAQRNNYKTVMSHRSGESEDAFIADFAVALNCGEIKTGAPARGERNAKYNRLLEIARSIAGAEYIGKDLF.

(2R)-2-phosphoglycerate is bound at residue Q162. E204 functions as the Proton donor in the catalytic mechanism. Mg(2+)-binding residues include D241, E284, and D311. The (2R)-2-phosphoglycerate site is built by K336, R365, S366, and K387. K336 acts as the Proton acceptor in catalysis.

It belongs to the enolase family. It depends on Mg(2+) as a cofactor.

Its subcellular location is the cytoplasm. It is found in the secreted. It localises to the cell surface. The catalysed reaction is (2R)-2-phosphoglycerate = phosphoenolpyruvate + H2O. It functions in the pathway carbohydrate degradation; glycolysis; pyruvate from D-glyceraldehyde 3-phosphate: step 4/5. Its function is as follows. Catalyzes the reversible conversion of 2-phosphoglycerate (2-PG) into phosphoenolpyruvate (PEP). It is essential for the degradation of carbohydrates via glycolysis. The sequence is that of Enolase from Nautilia profundicola (strain ATCC BAA-1463 / DSM 18972 / AmH).